Here is a 291-residue protein sequence, read N- to C-terminus: Formamidopyrimidine-DNA glycosylase (291 aa).

Catalysis depends on P2, which acts as the Schiff-base intermediate with DNA. E3 (proton donor) is an active-site residue. Catalysis depends on K58, which acts as the Proton donor; for beta-elimination activity. H104, R123, and K166 together coordinate DNA. Residues 257–291 (KVYDREGEPCPTCGGTVQRFVQNGRSTFWCPKCQK) form an FPG-type zinc finger. R281 acts as the Proton donor; for delta-elimination activity in catalysis.

Belongs to the FPG family. As to quaternary structure, monomer. Zn(2+) is required as a cofactor.

The enzyme catalyses Hydrolysis of DNA containing ring-opened 7-methylguanine residues, releasing 2,6-diamino-4-hydroxy-5-(N-methyl)formamidopyrimidine.. The catalysed reaction is 2'-deoxyribonucleotide-(2'-deoxyribose 5'-phosphate)-2'-deoxyribonucleotide-DNA = a 3'-end 2'-deoxyribonucleotide-(2,3-dehydro-2,3-deoxyribose 5'-phosphate)-DNA + a 5'-end 5'-phospho-2'-deoxyribonucleoside-DNA + H(+). Its function is as follows. Involved in base excision repair of DNA damaged by oxidation or by mutagenic agents. Acts as a DNA glycosylase that recognizes and removes damaged bases. Has a preference for oxidized purines, such as 7,8-dihydro-8-oxoguanine (8-oxoG). Has AP (apurinic/apyrimidinic) lyase activity and introduces nicks in the DNA strand. Cleaves the DNA backbone by beta-delta elimination to generate a single-strand break at the site of the removed base with both 3'- and 5'-phosphates. This is Formamidopyrimidine-DNA glycosylase from Rhodopseudomonas palustris (strain ATCC BAA-98 / CGA009).